A 501-amino-acid polypeptide reads, in one-letter code: MEPGPSVSPGPSRSFKEELLCAVCYDPFRDAVTLRCGHNFCRRCVSGCWEVQTTPSCPVCKERAVPGELRTNHTLNNLVETLLREEAEGARWTGRRSPRPCRAHRAPLTLFCVEDKELLCCACQADARHQEHRVQPIKDTAQDFRAKCKNMEHVLREKAKSFWALRRTYEAIAKHNEVQTTWLEGRIRDEFDKLRDFLRVEEQATVDAMKEESRKKHLLAEEKMKQLAEQTEALAREIERLQMEMKEDDMTFLMKHKSRKRRLFCTVEPAPLQPGLLMDACKYLESLQYRVWKKMLGSVESVPFSLDPNTAAGWLKVADDLTSVINHGYRVQVENPERFSSAPCLLGSQVFSKGSHSWEVDVGGLPSWRVGVVRVQAHAQAQAQADVGGEGHSHSCYHDTRSGFWYLCRTQGVDGDHCMTSDTATAPLVQAMPRRLRVELECEEGELSFYDSERHCHLYTFHAHFGEVRPYFYLGASRGDGPPEPLRICHLRVSIKEELDI.

Met-1 is subject to N-acetylmethionine. The residue at position 8 (Ser-8) is a Phosphoserine. The segment at 21–61 (CAVCYDPFRDAVTLRCGHNFCRRCVSGCWEVQTTPSCPVCK) adopts an RING-type zinc-finger fold. The B box-type zinc finger occupies 96-137 (RSPRPCRAHRAPLTLFCVEDKELLCCACQADARHQEHRVQPI). Residues Cys-101, His-104, Cys-123, and His-129 each contribute to the Zn(2+) site. A coiled-coil region spans residues 209 to 252 (MKEESRKKHLLAEEKMKQLAEQTEALAREIERLQMEMKEDDMTF). The B30.2/SPRY domain occupies 284 to 495 (LESLQYRVWK…LRICHLRVSI (212 aa)).

Interacts with PKM isoform M2, but not isoform M1; this interaction may compete with that between PKM and FGFR1, and hence reduces FGFR1-dependent tyrosine phosphorylation of PKM. Interacts with IRF7; this interaction promotes IRF7 proteasomal degradation. Interacts with TRAF3; this interaction promotes TRAF3 activation.

The protein resides in the cytoplasm. The protein localises to the nucleus. It carries out the reaction S-ubiquitinyl-[E2 ubiquitin-conjugating enzyme]-L-cysteine + [acceptor protein]-L-lysine = [E2 ubiquitin-conjugating enzyme]-L-cysteine + N(6)-ubiquitinyl-[acceptor protein]-L-lysine.. It participates in protein modification; protein ubiquitination. Functionally, E3 ubiquitin-protein ligase that participates in multiple biological processes including cell death, glucose metabolism, and in particular, the innate immune response. Mediates 'Lys-63'-linked polyubiquitination of TRAF3 thereby promoting type I interferon production via RIG-I signaling pathway. Can also catalyze 'Lys-48'-linked polyubiquitination and proteasomal degradation of viral proteins such as influenza virus PB2. Acts as a negative feedback regulator of TLR7- and TLR9-triggered signaling. Mechanistically, promotes the 'Lys-48'-linked ubiquitination of IRF7 and induces its degradation via a proteasome-dependent pathway. Reduces FGFR1-dependent tyrosine phosphorylation of PKM, inhibiting PKM-dependent lactate production, glucose metabolism, and cell growth. The protein is E3 ubiquitin-protein ligase TRIM35 (Trim35) of Rattus norvegicus (Rat).